A 233-amino-acid chain; its full sequence is Probable cyclic nucleotide phosphodiesterase COSY_0614 (233 aa).

7 residues coordinate Fe cation: Asp10, His12, Asp48, Asn78, His144, His183, and His185. AMP is bound by residues His12, Asp48, and 78–79 (NH). Residue His185 coordinates AMP.

Belongs to the cyclic nucleotide phosphodiesterase class-III family. It depends on Fe(2+) as a cofactor.

The sequence is that of Probable cyclic nucleotide phosphodiesterase COSY_0614 from Vesicomyosocius okutanii subsp. Calyptogena okutanii (strain HA).